A 176-amino-acid chain; its full sequence is Nucleoside triphosphate/diphosphate phosphatase (176 aa).

Residue R23 is the Proton donor of the active site. Mg(2+)-binding residues include N87, D103, D105, D107, D120, and E123.

This sequence belongs to the Ntdp family. Requires Mg(2+) as cofactor.

The catalysed reaction is a ribonucleoside 5'-triphosphate + H2O = a ribonucleoside 5'-diphosphate + phosphate + H(+). The enzyme catalyses a ribonucleoside 5'-diphosphate + H2O = a ribonucleoside 5'-phosphate + phosphate + H(+). Has nucleoside phosphatase activity towards nucleoside triphosphates and nucleoside diphosphates. This Bacillus cytotoxicus (strain DSM 22905 / CIP 110041 / 391-98 / NVH 391-98) protein is Nucleoside triphosphate/diphosphate phosphatase.